The sequence spans 702 residues: Putative GMC-type oxidoreductase R135 (702 aa).

Residues 55–75 (LTGDIVIIGAGAAGSLLAHYL) traverse the membrane as a helical segment. 58-88 (DIVIIGAGAAGSLLAHYLARFSNMKIILLEA) is an FAD binding site. H628 is a catalytic residue.

This sequence belongs to the GMC oxidoreductase family. It depends on FAD as a cofactor.

The protein localises to the virion. It is found in the host membrane. This Acanthamoeba polyphaga (Amoeba) protein is Putative GMC-type oxidoreductase R135.